The sequence spans 124 residues: Small ribosomal subunit protein uS12 (124 aa).

Residue Asp89 is modified to 3-methylthioaspartic acid.

Belongs to the universal ribosomal protein uS12 family. In terms of assembly, part of the 30S ribosomal subunit. Contacts proteins S8 and S17. May interact with IF1 in the 30S initiation complex.

Functionally, with S4 and S5 plays an important role in translational accuracy. In terms of biological role, interacts with and stabilizes bases of the 16S rRNA that are involved in tRNA selection in the A site and with the mRNA backbone. Located at the interface of the 30S and 50S subunits, it traverses the body of the 30S subunit contacting proteins on the other side and probably holding the rRNA structure together. The combined cluster of proteins S8, S12 and S17 appears to hold together the shoulder and platform of the 30S subunit. The polypeptide is Small ribosomal subunit protein uS12 (Thermoanaerobacter pseudethanolicus (strain ATCC 33223 / 39E) (Clostridium thermohydrosulfuricum)).